A 617-amino-acid chain; its full sequence is Chaperone protein HscA homolog (617 aa).

It belongs to the heat shock protein 70 family.

Chaperone involved in the maturation of iron-sulfur cluster-containing proteins. Has a low intrinsic ATPase activity which is markedly stimulated by HscB. The protein is Chaperone protein HscA homolog of Aliivibrio salmonicida (strain LFI1238) (Vibrio salmonicida (strain LFI1238)).